Consider the following 102-residue polypeptide: ATP-dependent Clp protease adapter protein ClpS (102 aa).

This sequence belongs to the ClpS family. In terms of assembly, binds to the N-terminal domain of the chaperone ClpA.

Its function is as follows. Involved in the modulation of the specificity of the ClpAP-mediated ATP-dependent protein degradation. The sequence is that of ATP-dependent Clp protease adapter protein ClpS from Herminiimonas arsenicoxydans.